Reading from the N-terminus, the 660-residue chain is CXXC-type zinc finger protein 1 (660 aa).

Position 1 is an N-acetylmethionine (methionine 1). Positions 1–14 (MEGDGSDLEPPDAG) are enriched in acidic residues. Residues 1–20 (MEGDGSDLEPPDAGDDSKSE) are disordered. Phosphoserine occurs at positions 6 and 19. The PHD-type zinc-finger motif lies at 28–76 (YCICRKPDINCFMIGCDNCNEWFHGDCIRITEKMAKAIREWYCRECREK). The segment covering 91–120 (ERDGSERAGSEPRDEGGGRKRPASDPELQR) has biased composition (basic and acidic residues). The segment at 91–166 (ERDGSERAGS…QQQQQQQQQI (76 aa)) is disordered. Serine 124 is subject to Phosphoserine. A CXXC-type zinc finger spans residues 164 to 213 (QQIKRSARMCGECEACRRTEDCGHCDFCRDMKKFGGPNKIRQKCRLRQCQ). Zn(2+) is bound by residues cysteine 173, cysteine 176, cysteine 179, cysteine 185, cysteine 188, cysteine 191, cysteine 207, and cysteine 212. Disordered stretches follow at residues 223 to 287 (FPSS…SDED) and 328 to 375 (AVKV…DPAS). Residue serine 228 is modified to Phosphoserine. Threonine 231 carries the post-translational modification Phosphothreonine. Lysine 254 is covalently cross-linked (Glycyl lysine isopeptide (Lys-Gly) (interchain with G-Cter in SUMO2)). Basic residues predominate over residues 328-338 (AVKVKHVKRRE). Over residues 339–349 (KKSEKKKEERY) the composition is skewed to basic and acidic residues. Residues 350 to 362 (KRHRQKQKHKDKW) are compositionally biased toward basic residues. The span at 363-372 (KHPERADAKD) shows a compositional bias: basic and acidic residues. Positions 426-479 (AEEHGKKLLERIRREQQSARTRLQEMERRFHELEAIILRAKQQAVREDEENNEN) form a coiled coil.

Component of the SET1 complex, at least composed of the catalytic subunit (SETD1A or SETD1B), WDR5, WDR82, RBBP5, ASH2L/ASH2, CXXC1/CFP1, HCFC1 and DPY30. Interacts with SETD1A. Interacts with ZNF335. Interacts with PRDM9; this interaction does not link PRDM9-activated recombination hotspot sites with DSB machinery and is not required for the hotspot recognition pathway. Interacts with histone H3K4me3. As to expression, expressed in seminiferous tubules and in both germ cells and Sertoli cells. Highly expressed in spermatogonia, weakly expressed in leptonema and zygonema, and then again high expression in pachynema and diplonema, decreasing to undetectable levels in spermatids.

The protein resides in the nucleus speckle. Its subcellular location is the nucleus. Transcriptional activator that exhibits a unique DNA binding specificity for CpG unmethylated motifs with a preference for CpGG. This Mus musculus (Mouse) protein is CXXC-type zinc finger protein 1 (Cxxc1).